The following is a 210-amino-acid chain: Probable nicotinate-nucleotide adenylyltransferase (210 aa).

The protein belongs to the NadD family.

The catalysed reaction is nicotinate beta-D-ribonucleotide + ATP + H(+) = deamido-NAD(+) + diphosphate. It participates in cofactor biosynthesis; NAD(+) biosynthesis; deamido-NAD(+) from nicotinate D-ribonucleotide: step 1/1. Its function is as follows. Catalyzes the reversible adenylation of nicotinate mononucleotide (NaMN) to nicotinic acid adenine dinucleotide (NaAD). The protein is Probable nicotinate-nucleotide adenylyltransferase of Streptococcus pyogenes serotype M18 (strain MGAS8232).